Consider the following 522-residue polypeptide: Acetylcholine receptor subunit delta (522 aa).

An N-terminal signal peptide occupies residues 1–21 (MGNIHFVYLLISCLYYSGCSG). Over 22–245 (VNEEERLIND…VTFYLIIRRK (224 aa)) the chain is Extracellular. 3 N-linked (GlcNAc...) asparagine glycosylation sites follow: Asn-91, Asn-164, and Asn-229. Residues Cys-151 and Cys-165 are joined by a disulfide bond. The next 3 membrane-spanning stretches (helical) occupy residues 246–270 (PLFYVINFITPCVLISFLASLAFYL), 278–295 (MSTAISVLLAQAVFLLLT), and 312–333 (YLMFIMSLVTGVIVNCGIVLNF). The Cytoplasmic segment spans residues 334–476 (HFRTPSTHVL…WNLVGQTIDR (143 aa)). Tyr-393 carries the phosphotyrosine; by Tyr-kinases modification. A helical membrane pass occupies residues 477 to 497 (LSMFIITPVMVLGTIFIFVMG).

The protein belongs to the ligand-gated ion channel (TC 1.A.9) family. Acetylcholine receptor (TC 1.A.9.1) subfamily. As to quaternary structure, pentamer of two alpha chains, and one each of the beta, delta, and gamma chains.

It is found in the postsynaptic cell membrane. Its subcellular location is the cell membrane. The catalysed reaction is K(+)(in) = K(+)(out). The enzyme catalyses Na(+)(in) = Na(+)(out). After binding acetylcholine, the AChR responds by an extensive change in conformation that affects all subunits and leads to opening of an ion-conducting channel across the plasma membrane. This is Acetylcholine receptor subunit delta (chrnd) from Tetronarce californica (Pacific electric ray).